Here is a 95-residue protein sequence, read N- to C-terminus: Small ribosomal subunit protein uS19 (95 aa).

Residues 76–95 (PTRRFGGHADKKAKKGELKK) are disordered. Residues 82–95 (GHADKKAKKGELKK) show a composition bias toward basic and acidic residues.

The protein belongs to the universal ribosomal protein uS19 family.

In terms of biological role, protein S19 forms a complex with S13 that binds strongly to the 16S ribosomal RNA. This chain is Small ribosomal subunit protein uS19, found in Thermotoga neapolitana (strain ATCC 49049 / DSM 4359 / NBRC 107923 / NS-E).